A 383-amino-acid chain; its full sequence is MHC class I polypeptide-related sequence A (383 aa).

An N-terminal signal peptide occupies residues Met-1–Ala-23. Residues Glu-24 to Trp-307 lie on the Extracellular side of the membrane. Asn-31 is a glycosylation site (N-linked (GlcNAc...) asparagine). Cys-59 and Cys-64 are joined by a disulfide. Asn-79 carries an N-linked (GlcNAc...) asparagine glycan. A disulfide bridge connects residues Cys-119 and Cys-187. An Ig-like C1-type domain is found at Pro-207–Pro-296. N-linked (GlcNAc...) asparagine glycosylation is found at Asn-210, Asn-220, and Asn-261. Cysteines 225 and 282 form a disulfide. A helical membrane pass occupies residues Gln-308–Val-328. Over Arg-329 to Ala-383 the chain is Cytoplasmic. S-palmitoyl cysteine attachment occurs at residues Cys-330 and Cys-331.

Belongs to the MHC class I family. MIC subfamily. As to quaternary structure, unlike classical MHC class I molecules, does not form a heterodimer with beta-2-microglobulin. Binds as a monomer to a KLRK1/NKG2D homodimer. KLRK1 forms a complex with HCST/DAP10 in which KLRK1 binds MICA while HCST acts as an adapter molecule which enables signal transduction. Interacts with PDIA6 on the surface of tumor cells, leading to disulfide bond reduction which is required for release of MICA from tumor cells. In terms of assembly, (Microbial infection) Interacts with human cytomegalovirus/HHV-5 protein UL142. Post-translationally, N-glycosylated. Glycosylation is not essential for interaction with KLRK1/NKG2D but enhances complex formation. Proteolytically cleaved and released from the cell surface of tumor cells which impairs KLRK1/NKG2D expression and T-cell activation. In terms of processing, palmitoylated on cysteine residues in the cytoplasmic tail leading to its association with membrane microdomains enriched in cholesterol. Post-translationally, N-glycosylation is necessary for cell surface expression. (Microbial infection) Ubiquitinated by human herpesvirus 8 protein K5, leading to degradation. Widely expressed with the exception of the central nervous system where it is absent. Expressed predominantly in gastric epithelium and also in monocytes, keratinocytes, endothelial cells, fibroblasts and in the outer layer of Hassal's corpuscles within the medulla of normal thymus. In skin, expressed mainly in the keratin layers, basal cells, ducts and follicles. Also expressed in many, but not all, epithelial tumors of lung, breast, kidney, ovary, prostate and colon. In thyomas, overexpressed in cortical and medullar epithelial cells. Tumors expressing MICA display increased levels of gamma delta T-cells.

It localises to the cell membrane. The protein resides in the cytoplasm. Widely expressed membrane-bound protein which acts as a ligand to stimulate an activating receptor KLRK1/NKG2D, expressed on the surface of essentially all human natural killer (NK), gammadelta T and CD8 alphabeta T-cells. Up-regulated in stressed conditions, such as viral and bacterial infections or DNA damage response, serves as signal of cellular stress, and engagement of KLRK1/NKG2D by MICA triggers NK-cells resulting in a range of immune effector functions, such as cytotoxicity and cytokine production. The polypeptide is MHC class I polypeptide-related sequence A (Homo sapiens (Human)).